The primary structure comprises 286 residues: MSSLRRLLLLLLLVFPATLLLRVGPGGSLAVAQDLTEDEETVEDSIIEDEDDEAEVEEDEPTDLAEDKEEDDVSGEPEASPSADTTILFVKGEDFPANNIVKFLVGFTNKGTEDFIVESLDASFRYPQDYQFYIQNFTALPLNTVVPPQRQATFEYSFIPAEPMGGRPFGLVINLNYKDLNGNVFQDAVFNQTVTIIEREDGLDGETIFMYMFLAGLGLLVVVGLHQLLESRKRKRPIQKVEMGTSSQNDVDMSWIPQETLNQINKASPRRLPRKRAQKRSVGSDE.

The N-terminal stretch at 1 to 20 (MSSLRRLLLLLLLVFPATLL) is a signal peptide. Residues 21 to 207 (LRVGPGGSLA…EREDGLDGET (187 aa)) are Lumenal-facing. The segment covering 37–75 (EDEETVEDSIIEDEDDEAEVEEDEPTDLAEDKEEDDVSG) has biased composition (acidic residues). Residues 37-83 (EDEETVEDSIIEDEDDEAEVEEDEPTDLAEDKEEDDVSGEPEASPSA) are disordered. Asn-136 and Asn-191 each carry an N-linked (GlcNAc...) asparagine glycan. The helical transmembrane segment at 208 to 228 (IFMYMFLAGLGLLVVVGLHQL) threads the bilayer. Over 229–286 (LESRKRKRPIQKVEMGTSSQNDVDMSWIPQETLNQINKASPRRLPRKRAQKRSVGSDE) the chain is Cytoplasmic. Residue Ser-247 is modified to Phosphoserine. Residue Thr-260 is modified to Phosphothreonine. Positions 261–286 (LNQINKASPRRLPRKRAQKRSVGSDE) are disordered. Residue Ser-268 is modified to Phosphoserine. Residues 268–279 (SPRRLPRKRAQK) are compositionally biased toward basic residues.

This sequence belongs to the TRAP-alpha family. As to quaternary structure, heterotetramer of TRAP-alpha, TRAP-beta, TRAP-delta and TRAP-gamma. Interacts with palmitoylated calnexin (CALX), the interaction is required for efficient folding of glycosylated proteins. Post-translationally, phosphorylated in its cytoplasmic tail.

The protein localises to the endoplasmic reticulum membrane. In terms of biological role, TRAP proteins are part of a complex whose function is to bind calcium to the ER membrane and thereby regulate the retention of ER resident proteins. May be involved in the recycling of the translocation apparatus after completion of the translocation process or may function as a membrane-bound chaperone facilitating folding of translocated proteins. This Bos taurus (Bovine) protein is Translocon-associated protein subunit alpha (SSR1).